A 628-amino-acid polypeptide reads, in one-letter code: Monoterpene synthase like 1, chloroplastic (628 aa).

Mg(2+) contacts are provided by Asp-379, Asp-383, and Asp-531. The DDXXD motif signature appears at 379–383; that stretch reads DDIYD.

The protein belongs to the terpene synthase family. Tpsd subfamily. Mg(2+) is required as a cofactor. Mn(2+) serves as cofactor.

It localises to the plastid. The protein localises to the chloroplast. Its pathway is terpene metabolism; oleoresin biosynthesis. The protein operates within secondary metabolite biosynthesis; terpenoid biosynthesis. Its function is as follows. Monoterpene synthase (TPS) involved in the biosynthesis of monoterpene natural products included in conifer oleoresin secretions and volatile emissions; these compounds contribute to biotic and abiotic stress defense against herbivores and pathogens. This Pinus banksiana (Jack pine) protein is Monoterpene synthase like 1, chloroplastic.